We begin with the raw amino-acid sequence, 247 residues long: 3-deoxy-manno-octulosonate cytidylyltransferase (247 aa).

It belongs to the KdsB family.

The protein localises to the cytoplasm. The enzyme catalyses 3-deoxy-alpha-D-manno-oct-2-ulosonate + CTP = CMP-3-deoxy-beta-D-manno-octulosonate + diphosphate. The protein operates within nucleotide-sugar biosynthesis; CMP-3-deoxy-D-manno-octulosonate biosynthesis; CMP-3-deoxy-D-manno-octulosonate from 3-deoxy-D-manno-octulosonate and CTP: step 1/1. It functions in the pathway bacterial outer membrane biogenesis; lipopolysaccharide biosynthesis. Activates KDO (a required 8-carbon sugar) for incorporation into bacterial lipopolysaccharide in Gram-negative bacteria. In Bdellovibrio bacteriovorus (strain ATCC 15356 / DSM 50701 / NCIMB 9529 / HD100), this protein is 3-deoxy-manno-octulosonate cytidylyltransferase.